The sequence spans 525 residues: MAPSGDSNVKEHNNQVSYKKAINTKTDLILQNKKHANDIFDVIEYLQSEKEKEIIFATNACSKIFCELIERGDLFVGELPKEEDLAQGDRSAEEKYHIFMRHRYNSCVELMLENVSHESFQVKETSLCAVMKFVATEGKHPLQNLDWSEHYNFPRELIQALVEHLLSEKEDMSLLISRFQEFMEKDDVRYYVMSSVRYSTATVMERNKKAVIPVFQNNVFNLLTTINIPNQASEMTNFLVQQQSKHDDWKAAKLKEHKRAFEQMWLLFLRYKLPGSMYKKILVILHESILPQMSDPKLMMDFLSAAYDIGGAISLSALNGLFVPIHEHNLDYPDFYKKLYNLLDPSIFHVKYRARFFHLANIFLSSTHLPVYLVAAFVKRLARLSLTAPPTALLILLPFICNLIRRHPSCRVLIHRPSAADEPCDDPYVMEEEDPAQCHALESSLWEIKTLQNHHHPDVSKAATMINEPLSAQEEDISELLELTTFELMERELKGEKKTVPLEFDMATDLLKSSREVLGVHFTLE.

3 helical membrane passes run 305–325 (AAYD…FVPI), 356–376 (FFHL…LVAA), and 384–404 (LSLT…CNLI).

Belongs to the CBF/MAK21 family.

It is found in the nucleus membrane. It localises to the nucleus. The protein localises to the nucleolus. The polypeptide is Nucleolar complex protein 4 homolog (noc4l) (Danio rerio (Zebrafish)).